The following is a 302-amino-acid chain: Lactoylglutathione lyase (302 aa).

VOC domains follow at residues 11-153 and 166-301; these read KLNH…LVSQ and RFNH…VIEQ. Position 14 (H14) interacts with Zn(2+). A substrate-binding site is contributed by R18. Zn(2+) is bound at residue E75. 3 residues coordinate substrate: N79, R99, and H103. Residues H103 and E149 each contribute to the Zn(2+) site. E149 acts as the Proton donor/acceptor in catalysis.

The protein belongs to the glyoxalase I family. In terms of assembly, monomer. The cofactor is Zn(2+). Cu(2+) is required as a cofactor. Ni(2+) serves as cofactor. Requires Mn(2+) as cofactor.

The enzyme catalyses (R)-S-lactoylglutathione = methylglyoxal + glutathione. The protein operates within secondary metabolite metabolism; methylglyoxal degradation; (R)-lactate from methylglyoxal: step 1/2. In terms of biological role, catalyzes the conversion of hemimercaptal, formed from methylglyoxal and glutathione, to S-lactoylglutathione. The protein is Lactoylglutathione lyase (glo1) of Schizosaccharomyces pombe (strain 972 / ATCC 24843) (Fission yeast).